Reading from the N-terminus, the 259-residue chain is Sphinganine C4-monooxygenase 2 (259 aa).

Helical transmembrane passes span 10-30 (FLGT…YICL), 54-74 (AVVK…VILF), and 91-111 (ILLL…WQYF). Residues 98-234 (FIIAMLVIDT…FVMWDRILGT (137 aa)) form the Fatty acid hydroxylase domain. Positions 113-117 (HRYMH) match the Histidine box-1 motif. The short motif at 127–131 (HSQHH) is the Histidine box-2 element. The short motif at 206 to 212 (YHDVHHQ) is the Histidine box-3 element.

It belongs to the sterol desaturase family. It depends on Fe cation as a cofactor. In terms of tissue distribution, ubiquitous, with higher levels in flowers and roots.

It is found in the endoplasmic reticulum membrane. It carries out the reaction a dihydroceramide + 2 Fe(II)-[cytochrome b5] + O2 + 2 H(+) = a phytoceramide + 2 Fe(III)-[cytochrome b5] + H2O. Its pathway is membrane lipid metabolism; sphingolipid biosynthesis. In terms of biological role, involved in sphingolipid trihydroxy long-chain base (4-hydroxysphinganine) biosynthesis. Can use C18- and C20-sphinganine as substrates to produce C18- and C20-phytosphinganines (D-ribo-2-amino-1,3,4-trihydroxyoctadecane and -eicosane). This Arabidopsis thaliana (Mouse-ear cress) protein is Sphinganine C4-monooxygenase 2 (SBH2).